The following is a 163-amino-acid chain: Outer membrane protein assembly factor BamE (163 aa).

The N-terminal stretch at 1 to 22 (MINKKQSLTLLSAIALSVSLSA) is a signal peptide. The N-palmitoyl cysteine moiety is linked to residue C23. Residue C23 is the site of S-diacylglycerol cysteine attachment. The tract at residues 122 to 163 (EQSKLPMVNTTESAPQVPAQRPDEKPLVKENQTEAQVQKPIK) is disordered. Residues 142–153 (RPDEKPLVKENQ) are compositionally biased toward basic and acidic residues.

The protein belongs to the BamE family. Part of the Bam complex.

It is found in the cell outer membrane. Its function is as follows. Part of the outer membrane protein assembly complex, which is involved in assembly and insertion of beta-barrel proteins into the outer membrane. This is Outer membrane protein assembly factor BamE from Shewanella oneidensis (strain ATCC 700550 / JCM 31522 / CIP 106686 / LMG 19005 / NCIMB 14063 / MR-1).